A 234-amino-acid chain; its full sequence is uncharacterized protein (234 aa).

The helical transmembrane segment at 13-32 (KSINYYIFFFQYTLVYNTIQ) threads the bilayer. 2 disordered regions span residues 102-130 (HSKT…SSNS) and 159-185 (ESDS…SEYE). Residues 103–130 (SKTTSLPFSSSSPQSSSSSSSSSSSSNS) are compositionally biased toward low complexity. The span at 167 to 185 (EFDSESNSDFDSESESEYE) shows a compositional bias: acidic residues.

The protein localises to the membrane. This is an uncharacterized protein from Dictyostelium discoideum (Social amoeba).